A 51-amino-acid polypeptide reads, in one-letter code: Large ribosomal subunit protein eL39 (51 aa).

It belongs to the eukaryotic ribosomal protein eL39 family.

The sequence is that of Large ribosomal subunit protein eL39 from Saccharolobus islandicus (strain Y.N.15.51 / Yellowstone #2) (Sulfolobus islandicus).